The sequence spans 48 residues: Protein PsbN (48 aa).

A helical transmembrane segment spans residues 12 to 34 (LLIAMVTITFGLTGYGLYTAFGP).

This sequence belongs to the PsbN family.

The protein localises to the cellular thylakoid membrane. Functionally, may play a role in photosystem I and II biogenesis. The polypeptide is Protein PsbN (Prochlorococcus marinus (strain MIT 9313)).